The primary structure comprises 109 residues: Urease subunit gamma (109 aa).

Belongs to the urease gamma subunit family. In terms of assembly, heterotrimer of UreA (gamma), UreB (beta) and UreC (alpha) subunits. Three heterotrimers associate to form the active enzyme.

Its subcellular location is the cytoplasm. It catalyses the reaction urea + 2 H2O + H(+) = hydrogencarbonate + 2 NH4(+). The protein operates within nitrogen metabolism; urea degradation; CO(2) and NH(3) from urea (urease route): step 1/1. This is Urease subunit gamma from Natronomonas pharaonis (strain ATCC 35678 / DSM 2160 / CIP 103997 / JCM 8858 / NBRC 14720 / NCIMB 2260 / Gabara) (Halobacterium pharaonis).